The primary structure comprises 374 residues: 4-hydroxy-3-methylbut-2-en-1-yl diphosphate synthase (flavodoxin) (374 aa).

Positions 270, 273, 305, and 312 each coordinate [4Fe-4S] cluster.

Belongs to the IspG family. Requires [4Fe-4S] cluster as cofactor.

It catalyses the reaction (2E)-4-hydroxy-3-methylbut-2-enyl diphosphate + oxidized [flavodoxin] + H2O + 2 H(+) = 2-C-methyl-D-erythritol 2,4-cyclic diphosphate + reduced [flavodoxin]. It functions in the pathway isoprenoid biosynthesis; isopentenyl diphosphate biosynthesis via DXP pathway; isopentenyl diphosphate from 1-deoxy-D-xylulose 5-phosphate: step 5/6. In terms of biological role, converts 2C-methyl-D-erythritol 2,4-cyclodiphosphate (ME-2,4cPP) into 1-hydroxy-2-methyl-2-(E)-butenyl 4-diphosphate. This chain is 4-hydroxy-3-methylbut-2-en-1-yl diphosphate synthase (flavodoxin), found in Vibrio cholerae serotype O1 (strain ATCC 39315 / El Tor Inaba N16961).